The primary structure comprises 416 residues: Gamma-glutamyl phosphate reductase (416 aa).

It belongs to the gamma-glutamyl phosphate reductase family.

The protein resides in the cytoplasm. The enzyme catalyses L-glutamate 5-semialdehyde + phosphate + NADP(+) = L-glutamyl 5-phosphate + NADPH + H(+). It functions in the pathway amino-acid biosynthesis; L-proline biosynthesis; L-glutamate 5-semialdehyde from L-glutamate: step 2/2. Functionally, catalyzes the NADPH-dependent reduction of L-glutamate 5-phosphate into L-glutamate 5-semialdehyde and phosphate. The product spontaneously undergoes cyclization to form 1-pyrroline-5-carboxylate. In Salmonella arizonae (strain ATCC BAA-731 / CDC346-86 / RSK2980), this protein is Gamma-glutamyl phosphate reductase.